A 115-amino-acid chain; its full sequence is U17-barytoxin-Tl1c (115 aa).

An N-terminal signal peptide occupies residues 1 to 20 (MKTIIVFLSLLVLATKFGDA). Residues 21–74 (KEGVNQKQKKEVTQNEFREEYLNEMAAMSLVQQLEAIERALFENEAGRNSRQKR) constitute a propeptide that is removed on maturation. Cystine bridges form between Cys-75-Cys-89, Cys-82-Cys-94, and Cys-88-Cys-109.

It belongs to the neurotoxin 14 (magi-1) family. 03 (ICK-30-40) subfamily. Expressed by the venom gland.

Its subcellular location is the secreted. In terms of biological role, ion channel inhibitor. The polypeptide is U17-barytoxin-Tl1c (Trittame loki (Brush-footed trapdoor spider)).